Here is a 506-residue protein sequence, read N- to C-terminus: Procardosin-B (506 aa).

Residues methionine 1 to serine 24 form the signal peptide. The propeptide occupies valine 25–serine 70. The 419-residue stretch at tyrosine 85–alanine 503 folds into the Peptidase A1 domain. Residue aspartate 103 is part of the active site. Residues cysteine 116 and cysteine 122 are joined by a disulfide bond. N-linked (GlcNAc...) asparagine glycosylation is found at asparagine 139 and asparagine 252. Cysteine 281 and cysteine 285 are joined by a disulfide. The active site involves aspartate 290. Residues valine 315–serine 417 form the Saposin B-type domain. 4 disulfides stabilise this stretch: cysteine 320-cysteine 411, cysteine 345-cysteine 383, cysteine 351-cysteine 380, and cysteine 425-cysteine 462. The N-linked (GlcNAc...) asparagine glycan is linked to asparagine 397.

This sequence belongs to the peptidase A1 family. As to quaternary structure, heterodimer of a light chain and a heavy chain. An intermediate form is produced first, and undergoes proteolytic processing to remove the internal plant-specific insert (PSI) and the propeptide. Detected in pistils, but not in seeds, bracts, midribs, roots, leaves or stamen extracts. Detected in seeds. In stigmas and styles, detected in the transmitting tissue and in contiguous subepidermal layers at the longitudenal grooves of the stigma (at protein level).

Its subcellular location is the microsome membrane. The protein resides in the protein storage vacuole. The protein localises to the secreted. It localises to the cell wall. It is found in the extracellular space. Its subcellular location is the extracellular matrix. With respect to regulation, inhibited by the specific aspartic proteinase inhibitors diazoacetyl-noleucine methyl ester and pepstatin. Aspartic protease. Cleaves alpha-lactalbumin but not beta-lactoglobulin. In Cynara cardunculus (Cardoon), this protein is Procardosin-B.